Reading from the N-terminus, the 61-residue chain is Large ribosomal subunit protein uL30 (61 aa).

This sequence belongs to the universal ribosomal protein uL30 family. In terms of assembly, part of the 50S ribosomal subunit.

The polypeptide is Large ribosomal subunit protein uL30 (Corynebacterium aurimucosum (strain ATCC 700975 / DSM 44827 / CIP 107346 / CN-1) (Corynebacterium nigricans)).